The sequence spans 428 residues: GTPase Obg (428 aa).

The Obg domain maps to 1–158 (MFIDIAKVFI…LSIVLELKLL (158 aa)). In terms of domain architecture, OBG-type G spans 159 to 331 (ADVGLLGFPN…VIKEAARMLK (173 aa)). GTP is bound by residues 165 to 172 (GFPNVGKS), 190 to 194 (FTTLK), 212 to 215 (DIPG), 282 to 285 (NKSD), and 312 to 314 (SAA). 2 residues coordinate Mg(2+): Ser-172 and Thr-192. In terms of domain architecture, OCT spans 345-428 (MYIPEEKKFT…LNDFEFEYLL (84 aa)).

It belongs to the TRAFAC class OBG-HflX-like GTPase superfamily. OBG GTPase family. In terms of assembly, monomer. Mg(2+) is required as a cofactor.

The protein resides in the cytoplasm. Functionally, an essential GTPase which binds GTP, GDP and possibly (p)ppGpp with moderate affinity, with high nucleotide exchange rates and a fairly low GTP hydrolysis rate. Plays a role in control of the cell cycle, stress response, ribosome biogenesis and in those bacteria that undergo differentiation, in morphogenesis control. This Clostridium botulinum (strain Alaska E43 / Type E3) protein is GTPase Obg.